We begin with the raw amino-acid sequence, 446 residues long: uncharacterized protein (446 aa).

2 disordered regions span residues 63-95 (KNKP…SDLR) and 155-232 (AESS…HPVK). The segment covering 156–169 (ESSVPTPKLTNESN) has biased composition (polar residues). Composition is skewed to basic and acidic residues over residues 182 to 199 (DQHE…DHSA) and 213 to 227 (ITKE…EARK).

This is an uncharacterized protein from Mus musculus (Mouse).